A 356-amino-acid chain; its full sequence is Nicotinate-nucleotide--dimethylbenzimidazole phosphoribosyltransferase (356 aa).

Glu-317 functions as the Proton acceptor in the catalytic mechanism.

Belongs to the CobT family. Homodimer.

The catalysed reaction is 5,6-dimethylbenzimidazole + nicotinate beta-D-ribonucleotide = alpha-ribazole 5'-phosphate + nicotinate + H(+). Its pathway is nucleoside biosynthesis; alpha-ribazole biosynthesis; alpha-ribazole from 5,6-dimethylbenzimidazole: step 1/2. Catalyzes the synthesis of alpha-ribazole-5'-phosphate from nicotinate mononucleotide (NAMN) and 5,6-dimethylbenzimidazole (DMB). The chain is Nicotinate-nucleotide--dimethylbenzimidazole phosphoribosyltransferase from Salmonella paratyphi A (strain AKU_12601).